The primary structure comprises 414 residues: Alanine--glyoxylate aminotransferase (414 aa).

The transit peptide at 1–23 (MFRMLAKASVTLGSRAASWVRNM) directs the protein to the mitochondrion. Position 231 is an N6-(pyridoxal phosphate)lysine (K231). K247 carries the post-translational modification N6-acetyllysine; alternate. At K247 the chain carries N6-succinyllysine; alternate. N6-acetyllysine occurs at positions 256 and 334. R382 provides a ligand contact to substrate. Positions 412–414 (NKL) match the Microbody targeting signal motif.

This sequence belongs to the class-V pyridoxal-phosphate-dependent aminotransferase family. In terms of assembly, homodimer. Pyridoxal 5'-phosphate is required as a cofactor.

It is found in the peroxisome. The protein localises to the mitochondrion matrix. The catalysed reaction is L-serine + pyruvate = 3-hydroxypyruvate + L-alanine. The enzyme catalyses glyoxylate + L-alanine = glycine + pyruvate. Catalyzes the transamination of glyoxylate to glycine and contributes to the glyoxylate detoxification. Functionally, catalyzes the transamination between L-serine and pyruvate and weakly contributes to gluconeogenesis from the L-serine metabolism. The protein is Alanine--glyoxylate aminotransferase of Rattus norvegicus (Rat).